The primary structure comprises 406 residues: WD repeat and SOCS box-containing protein 2 (406 aa).

The tract at residues 70-89 (AKSRSSKNETKGRGSPKEKT) is disordered. WD repeat units follow at residues 107-150 (PPSK…LLLN), 153-193 (GHQD…KQIQ), 197-236 (GHLQ…LIRK), 239-278 (GHQS…RLRS), and 293-332 (VHIS…PIAF). In terms of domain architecture, SOCS box spans 358–406 (HVQFWTAPRVLSSLKHLCRKALRSFLTTYQVLALPIPKKMKEFLTYRTF).

Its pathway is protein modification; protein ubiquitination. May be a substrate-recognition component of a SCF-like ECS (Elongin-Cullin-SOCS-box protein) E3 ubiquitin ligase complex which mediates the ubiquitination and subsequent proteasomal degradation of target proteins. In Bos taurus (Bovine), this protein is WD repeat and SOCS box-containing protein 2 (WSB2).